Reading from the N-terminus, the 77-residue chain is Large ribosomal subunit protein eL20 (77 aa).

The protein belongs to the eukaryotic ribosomal protein eL20 family. In terms of assembly, part of the 50S ribosomal subunit. Binds 23S rRNA.

This is Large ribosomal subunit protein eL20 from Thermococcus gammatolerans (strain DSM 15229 / JCM 11827 / EJ3).